The following is a 775-amino-acid chain: Venom dipeptidyl peptidase 4 (775 aa).

The first 23 residues, 1–23 (MEVLVQLALLLVVHGSLVVLVAG), serve as a signal peptide directing secretion. Asparagine 68 and asparagine 239 each carry an N-linked (GlcNAc...) asparagine glycan. 2 disulfide bridges follow: cysteine 450–cysteine 453 and cysteine 463–cysteine 481. 4 N-linked (GlcNAc...) asparagine glycosylation sites follow: asparagine 473, asparagine 505, asparagine 578, and asparagine 631. The Charge relay system role is filled by serine 639. An intrachain disulfide couples cysteine 659 to cysteine 770. N-linked (GlcNAc...) asparagine glycosylation is found at asparagine 689 and asparagine 694. Catalysis depends on charge relay system residues aspartate 718 and histidine 750.

Belongs to the peptidase S9B family. DPPIV subfamily. Expressed by the venom duct.

It localises to the secreted. The enzyme catalyses Release of an N-terminal dipeptide, Xaa-Yaa-|-Zaa-, from a polypeptide, preferentially when Yaa is Pro, provided Zaa is neither Pro nor hydroxyproline.. Inhibited by diprotin A. Functionally, venom dipeptidyl-peptidase which removes N-terminal dipeptides sequentially from polypeptides having unsubstituted N-termini provided that the penultimate residue is proline. May process promelittin into its active form and/or modulate the chemotactic activity of immune cells after the insect sting. This chain is Venom dipeptidyl peptidase 4, found in Apis mellifera (Honeybee).